Consider the following 338-residue polypeptide: Oxygen-dependent coproporphyrinogen-III oxidase (338 aa).

Substrate is bound at residue S104. A divalent metal cation-binding residues include H108 and H118. H118 acts as the Proton donor in catalysis. Residue 120–122 participates in substrate binding; that stretch reads NYR. 2 residues coordinate a divalent metal cation: H152 and H182. Positions 274–309 are important for dimerization; the sequence is YVEFNLVYDRGTIFGLQTNGRTESILMSLPPLVRWE.

It belongs to the aerobic coproporphyrinogen-III oxidase family. Homodimer. A divalent metal cation is required as a cofactor.

The protein localises to the cytoplasm. The enzyme catalyses coproporphyrinogen III + O2 + 2 H(+) = protoporphyrinogen IX + 2 CO2 + 2 H2O. It participates in porphyrin-containing compound metabolism; protoporphyrin-IX biosynthesis; protoporphyrinogen-IX from coproporphyrinogen-III (O2 route): step 1/1. Functionally, involved in the heme and chlorophyll biosynthesis. Catalyzes the aerobic oxidative decarboxylation of propionate groups of rings A and B of coproporphyrinogen-III to yield the vinyl groups in protoporphyrinogen-IX. This Thermosynechococcus vestitus (strain NIES-2133 / IAM M-273 / BP-1) protein is Oxygen-dependent coproporphyrinogen-III oxidase.